Consider the following 87-residue polypeptide: uncharacterized protein (87 aa).

A helical transmembrane segment spans residues 63–83 (IVLALVLGVFSLVGLIFIIYF).

It localises to the membrane. This is an uncharacterized protein from Dictyostelium discoideum (Social amoeba).